The following is a 144-amino-acid chain: Large ribosomal subunit protein uL13 (144 aa).

This sequence belongs to the universal ribosomal protein uL13 family. Part of the 50S ribosomal subunit.

Functionally, this protein is one of the early assembly proteins of the 50S ribosomal subunit, although it is not seen to bind rRNA by itself. It is important during the early stages of 50S assembly. In Lachnoclostridium phytofermentans (strain ATCC 700394 / DSM 18823 / ISDg) (Clostridium phytofermentans), this protein is Large ribosomal subunit protein uL13.